We begin with the raw amino-acid sequence, 1907 residues long: Receptor-type tyrosine-protein phosphatase F (1907 aa).

An N-terminal signal peptide occupies residues 1–29 (MAPEPAPGRTMVPLVPALVMLGLVAGAHG). The Extracellular portion of the chain corresponds to 30–1263 (DSKPVFIKVP…QQQEEPEMLW (1234 aa)). Ig-like C2-type domains are found at residues 33 to 123 (PVFI…AKLS), 135 to 224 (PSID…ANLY), and 232 to 314 (PRFS…AQVT). A disulfide bridge connects residues cysteine 54 and cysteine 107. Position 68–77 (68–77 (KKGKKVSSQR)) interacts with heparin. Asparagine 117 carries N-linked (GlcNAc...) asparagine glycosylation. A disulfide bond links cysteine 156 and cysteine 207. Asparagine 250 and asparagine 295 each carry an N-linked (GlcNAc...) asparagine glycan. A disulfide bond links cysteine 253 and cysteine 298. 8 Fibronectin type-III domains span residues 321–411 (PPID…TGEQ), 416–510 (PPRR…TQQG), 514–604 (QPAD…TAQS), 609–706 (PPQK…TDED), 711–819 (PPRK…TTGA), 820–914 (VPGR…PEDL), 918–1010 (FPQN…TMPV), and 1014–1098 (FAKN…TAPD). A disordered region spans residues 398-417 (GPPSEAVRARTGEQAPSSPP). Positions 693–712 (GPESSPVLVRTDEDVPSGPP) are disordered. N-linked (GlcNAc...) asparagine glycosylation occurs at asparagine 721. N-linked (GlcNAc...) asparagine glycosylation is present at asparagine 966. A helical membrane pass occupies residues 1264-1284 (VTGPVLAVILIILIVIAILLF). The Cytoplasmic segment spans residues 1285–1907 (KRKRTHSPSS…YLGSFDHYAT (623 aa)). A Phosphoserine modification is found at serine 1305. Tyrosine-protein phosphatase domains lie at 1352–1607 (FSQE…LLEA) and 1639–1898 (MELE…ALEY). Substrate-binding positions include aspartate 1516, 1548-1554 (CSAGVGR), and glutamine 1592. Cysteine 1548 functions as the Phosphocysteine intermediate in the catalytic mechanism. Cysteine 1839 acts as the Phosphocysteine intermediate in catalysis.

Belongs to the protein-tyrosine phosphatase family. Receptor class 2A subfamily. Interacts with GRIP1. Interacts with PPFIA1, PPFIA2 and PPFIA3. Interacts with INSR.

The protein resides in the membrane. The enzyme catalyses O-phospho-L-tyrosyl-[protein] + H2O = L-tyrosyl-[protein] + phosphate. Functionally, possible cell adhesion receptor. It possesses an intrinsic protein tyrosine phosphatase activity (PTPase) and dephosphorylates EPHA2 regulating its activity. The first PTPase domain has enzymatic activity, while the second one seems to affect the substrate specificity of the first one. This Homo sapiens (Human) protein is Receptor-type tyrosine-protein phosphatase F (PTPRF).